The chain runs to 192 residues: Ras-like GTP-binding protein Rho1 (192 aa).

Position 12–19 (12–19 (GDGACGKT)) interacts with GTP. The short motif at 34–42 (YVPTVFENY) is the Effector region element. GTP-binding positions include 59 to 63 (DTAGQ) and 117 to 120 (NKKD). Position 189 is a cysteine methyl ester (cysteine 189). A lipid anchor (S-geranylgeranyl cysteine) is attached at cysteine 189. Positions 190 to 192 (LLL) are cleaved as a propeptide — removed in mature form.

It belongs to the small GTPase superfamily. Rho family. As to quaternary structure, interacts with capu. Interacts (via REM repeats) with Pkn (via N-terminus). Interacts (via N-terminus) with wash (via N-terminus). May interact with dia/diaphanous (via CBD/FH3 domain). Expressed in hemocytes (at protein level).

The protein localises to the cell membrane. It is found in the cytoplasm. Its subcellular location is the cytoskeleton. The protein resides in the apical cell membrane. It localises to the lateral cell membrane. Its function is as follows. Has a role in regulating actin cytoskeletal organization: required during early development for proper execution of morphogenetic movements of individual cells and groups of cells important for the formation of the embryonic body plan. Plays a role in regulating dorsal closure during embryogenesis. During axis elongation, required for Rho-kinase Rok planar polarity and adherens junction localization as well as for generating a planar polarized distribution of the actin-binding protein Shrm. During embryogenesis, acts upstream of wash to regulate the developmental migration of tail hemocytes anteriorly along the ventral midline. May have a role in eye development. Involved in targeted recruitment of dia/diaphanous to apical membranes of polarized epithelial cells. This is Ras-like GTP-binding protein Rho1 from Drosophila melanogaster (Fruit fly).